The primary structure comprises 472 residues: Membrane-bound acylglycerophosphatidylinositol O-acyltransferase MBOAT7 (472 aa).

Topologically, residues 1-5 (MSPEE) are cytoplasmic. A helical membrane pass occupies residues 6–22 (WTYLVVLLISIPIGFLF). Topologically, residues 23–33 (KKAGPGLKRWG) are lumenal. Residues 34 to 57 (AAAVGLGLTLFTCGPHTLHSLVTI) form a helical membrane-spanning segment. Over 58–73 (LGTWALIQAQPCSCHA) the chain is Cytoplasmic. A helical transmembrane segment spans residues 74 to 93 (LALAWTFSYLLFFRALSLLG). Residues 94 to 194 (LPTPTPFTNA…VPSLRPLLRR (101 aa)) lie on the Lumenal side of the membrane. Residues 195–212 (AWPAPLFGLLFLLSSHLF) traverse the membrane as a helical segment. The Cytoplasmic segment spans residues 213–231 (PLEAVREDAFYARPLPARL). The chain crosses the membrane as a helical span at residues 232–261 (FYMIPVFFAFRMRFYVAWIAAECGCIAAGF). The Lumenal segment spans residues 262–426 (GAYPVAAKAR…LSLRDTLRYW (165 aa)). Asparagine 321 is a glycosylation site (N-linked (GlcNAc...) asparagine). A helical membrane pass occupies residues 427 to 447 (ASVYFCVHVLALAALGLGLAL). The Cytoplasmic portion of the chain corresponds to 448–472 (GRGGPGRRKSGAPAPSPASGKLREE). The interval 450–472 (GGPGRRKSGAPAPSPASGKLREE) is disordered.

The protein belongs to the membrane-bound acyltransferase family. In terms of assembly, interacts with SPTSSA; the interaction facilitates MBOAT7 location to mitochondria-associated membranes (MAMs).

The protein resides in the endoplasmic reticulum membrane. It catalyses the reaction a 1-acyl-sn-glycero-3-phospho-(1D-myo-inositol) + an acyl-CoA = a 1,2-diacyl-sn-glycero-3-phospho-(1D-myo-inositol) + CoA. The catalysed reaction is a 1-acyl-sn-glycero-3-phospho-(1D-myo-inositol) + (5Z,8Z,11Z,14Z)-eicosatetraenoyl-CoA = a 1-acyl-2-(5Z,8Z,11Z,14Z-eicosatetraenoyl)-sn-glycero-3-phospho-(1D-myo-inositol) + CoA. It carries out the reaction (5Z,8Z,11Z,14Z)-eicosatetraenoyl-CoA + 1-hexadecanoyl-sn-glycero-3-phosphocholine = 1-hexadecanoyl-2-(5Z,8Z,11Z,14Z-eicosatetraenoyl)-sn-glycero-3-phosphocholine + CoA. The enzyme catalyses 1-octadecanoyl-sn-glycero-3-phospho-(1D-myo-inositol) + (5Z,8Z,11Z,14Z)-eicosatetraenoyl-CoA = 1-octadecanoyl-2-(5Z,8Z,11Z,14Z-eicosatetraenoyl)-sn-glycero-3-phospho-(1D-myo-inositol) + CoA. It functions in the pathway lipid metabolism; phospholipid metabolism. Its function is as follows. Acyltransferase which catalyzes the transfer of an acyl group from an acyl-CoA to a lysophosphatidylinositol (1-acylglycerophosphatidylinositol or LPI) leading to the production of a phosphatidylinositol (1,2-diacyl-sn-glycero-3-phosphoinositol or PI) and participates in the reacylation step of the phospholipid remodeling pathway also known as the Lands cycle. Prefers arachidonoyl-CoA as the acyl donor, thus contributing to the regulation of free levels arachidonic acid in cell. In liver, participates in the regulation of triglyceride metabolism through the phosphatidylinositol acyl-chain remodeling regulation. This is Membrane-bound acylglycerophosphatidylinositol O-acyltransferase MBOAT7 (MBOAT7) from Bos taurus (Bovine).